We begin with the raw amino-acid sequence, 364 residues long: Trans-enoyl reductase traG (364 aa).

Position 51 to 54 (51 to 54 (VDAK)) interacts with NADP(+). Residue 136 to 143 (LGLFTAGL) coordinates substrate. Residues 176-179 (STAT), 199-202 (SKAN), Y217, and 264-265 (LE) each bind NADP(+). 286–290 (ALTVF) provides a ligand contact to substrate. 355-356 (MS) contacts NADP(+).

The protein belongs to the zinc-containing alcohol dehydrogenase family. In terms of assembly, monomer.

The protein operates within secondary metabolite biosynthesis. Trans-enoyl reductase; part of the tra gene cluster that produces terrestric acid. The clavatol biosynthesis cluster cla and the terrestric acid cluster tra are both involved in the production of peniphenones and penilactones. The non-reducing PKS claF is responsible for the formation of clavatol from successive condensations of 3 malonyl-CoA units, presumably with a simple acetyl-CoA starter unit, and 2 methylation steps. The esterase claE probably collaborates with claF by catalyzing the hydrolysis of ACP-bound acyl intermediates to free the ACP from stalled intermediates. The clavatol oxidase claD then converts clavatol to hydroxyclavatol. Spontaneous dehydration of hydroxyclavatol leads to the accumulation of the highly active ortho-quinone methide. On the other hand, the PKS-NRPS hybrid traA is involved in the formation of crustosic acid, with the help of traB and traD. The polyketide synthase module (PKS) of traA is responsible for the synthesis of the polyketide backbone via the condensation of an acetyl-CoA starter unit with 3 malonyl-CoA units. The downstream nonribosomal peptide synthetase (NRPS) module then amidates the carboxyl end of the polyketide with L-malic acid. Because traA lacks a designated enoylreductase (ER) domain, the required activity is provided the enoyl reductase traG. Crustosic acid undergoes decarboxylation and isomerization to the terrestric acid, catalyzed by the 2-oxoglutarate-dependent dioxygenase traH. Both acids are further converted to the 2 gamma-butyrolactones (R)-5-methyltetronic acid and (S)-5-carboxylmethyltetronic acid, with involvement of the cytochrome P450 monooxygenase claJ. Spontaneous addition of the methide to these gamma-butyrolactones leads to peniphenone D and penilactone D, which undergo again stereospecific attacking by methide to give penilactones A and B. The sequence is that of Trans-enoyl reductase traG from Penicillium crustosum (Blue mold fungus).